The sequence spans 180 residues: Nucleoside triphosphate/diphosphate phosphatase (180 aa).

Catalysis depends on R26, which acts as the Proton donor. N90, D106, D108, D110, D123, and E126 together coordinate Mg(2+).

Belongs to the Ntdp family. Mg(2+) is required as a cofactor.

It carries out the reaction a ribonucleoside 5'-triphosphate + H2O = a ribonucleoside 5'-diphosphate + phosphate + H(+). The catalysed reaction is a ribonucleoside 5'-diphosphate + H2O = a ribonucleoside 5'-phosphate + phosphate + H(+). Its function is as follows. Has nucleoside phosphatase activity towards nucleoside triphosphates and nucleoside diphosphates. In Staphylococcus aureus (strain MSSA476), this protein is Nucleoside triphosphate/diphosphate phosphatase.